The sequence spans 687 residues: DNA-directed RNA polymerase subunit beta' (687 aa).

Residues Cys76, Cys78, Cys94, and Cys97 each coordinate Zn(2+). Residues Asp496, Asp498, and Asp500 each coordinate Mg(2+).

This sequence belongs to the RNA polymerase beta' chain family. RpoC1 subfamily. As to quaternary structure, in plastids the minimal PEP RNA polymerase catalytic core is composed of four subunits: alpha, beta, beta', and beta''. When a (nuclear-encoded) sigma factor is associated with the core the holoenzyme is formed, which can initiate transcription. It depends on Mg(2+) as a cofactor. Zn(2+) serves as cofactor.

It localises to the plastid. It is found in the chloroplast. The enzyme catalyses RNA(n) + a ribonucleoside 5'-triphosphate = RNA(n+1) + diphosphate. DNA-dependent RNA polymerase catalyzes the transcription of DNA into RNA using the four ribonucleoside triphosphates as substrates. This chain is DNA-directed RNA polymerase subunit beta', found in Ipomoea purpurea (Common morning glory).